Reading from the N-terminus, the 83-residue chain is Probable insulin-like peptide alpha-type 2 (83 aa).

A signal peptide spans 1-21 (MHTTTILICFFIFLVQVSTMD). Cystine bridges form between Cys32/Cys66, Cys44/Cys79, and Cys54/Cys80.

This sequence belongs to the insulin family.

It is found in the secreted. This is Probable insulin-like peptide alpha-type 2 (ins-22) from Caenorhabditis elegans.